We begin with the raw amino-acid sequence, 160 residues long: MASIAVCPGSFDPVTYGHLDIIRRGANVFEQVYVCVLNNSSKQPLFTVEERCELLREVTKDIPNVTVETSQGLLIDYAKKKRAKAIIRGLRAVSDFEYEMQGTSVNRVLDESIETFFMMTNNQYSFLSSSIVKEVAKYNGPVSEFVPPEVEQALMQKFKG.

Position 10 (Ser-10) interacts with substrate. ATP contacts are provided by residues 10 to 11 (SF) and His-18. Residues Lys-42, Leu-74, and Arg-88 each coordinate substrate. Residues 89–91 (GLR), Glu-99, and 124–130 (YSFLSSS) contribute to the ATP site.

It belongs to the bacterial CoaD family. In terms of assembly, homohexamer. It depends on Mg(2+) as a cofactor.

Its subcellular location is the cytoplasm. It catalyses the reaction (R)-4'-phosphopantetheine + ATP + H(+) = 3'-dephospho-CoA + diphosphate. Its pathway is cofactor biosynthesis; coenzyme A biosynthesis; CoA from (R)-pantothenate: step 4/5. In terms of biological role, reversibly transfers an adenylyl group from ATP to 4'-phosphopantetheine, yielding dephospho-CoA (dPCoA) and pyrophosphate. The sequence is that of Phosphopantetheine adenylyltransferase from Bacillus velezensis (strain DSM 23117 / BGSC 10A6 / LMG 26770 / FZB42) (Bacillus amyloliquefaciens subsp. plantarum).